We begin with the raw amino-acid sequence, 199 residues long: Small ribosomal subunit protein uS4 (199 aa).

Residues 91–153 enclose the S4 RNA-binding domain; it reads ARLDNVVYRM…SKNFVVIKEA (63 aa).

It belongs to the universal ribosomal protein uS4 family. As to quaternary structure, part of the 30S ribosomal subunit. Contacts protein S5. The interaction surface between S4 and S5 is involved in control of translational fidelity.

In terms of biological role, one of the primary rRNA binding proteins, it binds directly to 16S rRNA where it nucleates assembly of the body of the 30S subunit. Functionally, with S5 and S12 plays an important role in translational accuracy. In Exiguobacterium sibiricum (strain DSM 17290 / CCUG 55495 / CIP 109462 / JCM 13490 / 255-15), this protein is Small ribosomal subunit protein uS4.